A 189-amino-acid polypeptide reads, in one-letter code: Elongation factor P (189 aa).

Lys-34 carries the N6-(3,6-diaminohexanoyl)-5-hydroxylysine modification.

This sequence belongs to the elongation factor P family. May be beta-lysylated on the epsilon-amino group of Lys-34 by the combined action of EpmA and EpmB, and then hydroxylated on the C5 position of the same residue by EpmC (if this protein is present). Lysylation is critical for the stimulatory effect of EF-P on peptide-bond formation. The lysylation moiety may extend toward the peptidyltransferase center and stabilize the terminal 3-CCA end of the tRNA. Hydroxylation of the C5 position on Lys-34 may allow additional potential stabilizing hydrogen-bond interactions with the P-tRNA.

Its subcellular location is the cytoplasm. Its pathway is protein biosynthesis; polypeptide chain elongation. Functionally, involved in peptide bond synthesis. Alleviates ribosome stalling that occurs when 3 or more consecutive Pro residues or the sequence PPG is present in a protein, possibly by augmenting the peptidyl transferase activity of the ribosome. Modification of Lys-34 is required for alleviation. In Baumannia cicadellinicola subsp. Homalodisca coagulata, this protein is Elongation factor P.